The chain runs to 347 residues: Probable dual-specificity RNA methyltransferase RlmN (347 aa).

Catalysis depends on Glu94, which acts as the Proton acceptor. A Radical SAM core domain is found at 100–319 (YPSRTIACIS…LDTLVKNGID (220 aa)). A disulfide bond links Cys107 and Cys334. 3 residues coordinate [4Fe-4S] cluster: Cys114, Cys118, and Cys121. S-adenosyl-L-methionine contacts are provided by residues 161 to 162 (GE), Ser193, 216 to 218 (SLH), and Asn292. Residue Cys334 is the S-methylcysteine intermediate of the active site.

The protein belongs to the radical SAM superfamily. RlmN family. Requires [4Fe-4S] cluster as cofactor.

It is found in the cytoplasm. The enzyme catalyses adenosine(2503) in 23S rRNA + 2 reduced [2Fe-2S]-[ferredoxin] + 2 S-adenosyl-L-methionine = 2-methyladenosine(2503) in 23S rRNA + 5'-deoxyadenosine + L-methionine + 2 oxidized [2Fe-2S]-[ferredoxin] + S-adenosyl-L-homocysteine. The catalysed reaction is adenosine(37) in tRNA + 2 reduced [2Fe-2S]-[ferredoxin] + 2 S-adenosyl-L-methionine = 2-methyladenosine(37) in tRNA + 5'-deoxyadenosine + L-methionine + 2 oxidized [2Fe-2S]-[ferredoxin] + S-adenosyl-L-homocysteine. Specifically methylates position 2 of adenine 2503 in 23S rRNA and position 2 of adenine 37 in tRNAs. The sequence is that of Probable dual-specificity RNA methyltransferase RlmN from Petrotoga mobilis (strain DSM 10674 / SJ95).